The chain runs to 271 residues: Putative phosphoenolpyruvate synthase regulatory protein (271 aa).

151 to 158 (GVSRSGKT) lines the ADP pocket.

This sequence belongs to the pyruvate, phosphate/water dikinase regulatory protein family. PSRP subfamily.

The catalysed reaction is [pyruvate, water dikinase] + ADP = [pyruvate, water dikinase]-phosphate + AMP + H(+). It carries out the reaction [pyruvate, water dikinase]-phosphate + phosphate + H(+) = [pyruvate, water dikinase] + diphosphate. In terms of biological role, bifunctional serine/threonine kinase and phosphorylase involved in the regulation of the phosphoenolpyruvate synthase (PEPS) by catalyzing its phosphorylation/dephosphorylation. In Burkholderia thailandensis (strain ATCC 700388 / DSM 13276 / CCUG 48851 / CIP 106301 / E264), this protein is Putative phosphoenolpyruvate synthase regulatory protein.